A 427-amino-acid polypeptide reads, in one-letter code: MTAIVDIIGREILDSRGNPTVEVDVVLEDGSVGRAAVPSGASTGAHEAVELRDGDKSRYLGKGVLKAVEAVNGELFDALGGMDAEAQVQIDQTMIELDGTPNKSRLGANAILGVSLAVAKAAASSYDLPLYRYVGGTSARTLPVPMMNIINGGAHADNPIDFQEFMIMPAGAASFSEALRCGSEIFHTLKGELKKAGHNTNVGDEGGFAPNLPSADAALDFVVSAIGKAGYKAGEDVMIALDPASTEFFKNGKYVYEAEGRSLGPQEQAKYLADLVARYPIVSIEDGMAEDDIEGWKAITGLIGDKCQLVGDDLFVTNVTRLYDGIKNGYANSILIKVNQIGTLTETLAAVEMAHKAGYTAVMSHRSGETEDSTIADLAVATNCGQIKTGSLARADRTSKYNQLLRIEQELGTQAHFAGKAALKAFR.

Gln163 contacts (2R)-2-phosphoglycerate. Glu205 (proton donor) is an active-site residue. The Mg(2+) site is built by Asp242, Glu285, and Asp312. The (2R)-2-phosphoglycerate site is built by Lys337, Arg366, Ser367, and Lys388. The active-site Proton acceptor is the Lys337.

This sequence belongs to the enolase family. Requires Mg(2+) as cofactor.

It is found in the cytoplasm. The protein resides in the secreted. The protein localises to the cell surface. It catalyses the reaction (2R)-2-phosphoglycerate = phosphoenolpyruvate + H2O. It functions in the pathway carbohydrate degradation; glycolysis; pyruvate from D-glyceraldehyde 3-phosphate: step 4/5. Its function is as follows. Catalyzes the reversible conversion of 2-phosphoglycerate (2-PG) into phosphoenolpyruvate (PEP). It is essential for the degradation of carbohydrates via glycolysis. This is Enolase from Rhodopseudomonas palustris (strain HaA2).